The chain runs to 359 residues: 3-dehydroquinate synthase (359 aa).

NAD(+) contacts are provided by residues 71 to 76 (DGEQYK), 105 to 109 (GVIGD), 129 to 130 (TT), Lys-142, Lys-151, and 169 to 172 (CLST). The Zn(2+) site is built by Glu-184, His-247, and His-264.

Belongs to the sugar phosphate cyclases superfamily. Dehydroquinate synthase family. Requires Co(2+) as cofactor. Zn(2+) is required as a cofactor. It depends on NAD(+) as a cofactor.

It localises to the cytoplasm. It carries out the reaction 7-phospho-2-dehydro-3-deoxy-D-arabino-heptonate = 3-dehydroquinate + phosphate. The protein operates within metabolic intermediate biosynthesis; chorismate biosynthesis; chorismate from D-erythrose 4-phosphate and phosphoenolpyruvate: step 2/7. In terms of biological role, catalyzes the conversion of 3-deoxy-D-arabino-heptulosonate 7-phosphate (DAHP) to dehydroquinate (DHQ). This Shewanella pealeana (strain ATCC 700345 / ANG-SQ1) protein is 3-dehydroquinate synthase.